We begin with the raw amino-acid sequence, 271 residues long: MQYWGKIIGVAVALIMGGGFWGVVLGLLIGHMFDKARSRKMAWFANQRERQALFFATTFEVMGHLTKSKGRVTEADIHIASQLMDRMNLHGASRTAAQNAFRVGKSDNYPLREKMRQFRSVCFGRFDLIRMFLEIQIQAAFADGSLHPNERAVLYVIAEELGISRAQFDQFLRMMQGGAQFGGGYQQQSGGGNWQQAQRGPTLEDACNVLGVKPTDDATTIKRAYRKLMSEHHPDKLVAKGLPPEMMEMAKQKAQEIQQAYELIKQQKGFK.

The Periplasmic segment spans residues 1–6; sequence MQYWGK. A helical transmembrane segment spans residues 7–31; it reads IIGVAVALIMGGGFWGVVLGLLIGH. Over 32 to 271 the chain is Cytoplasmic; sequence MFDKARSRKM…ELIKQQKGFK (240 aa). One can recognise a J domain in the interval 205–271; it reads DACNVLGVKP…ELIKQQKGFK (67 aa).

As to quaternary structure, homodimer.

The protein resides in the cell inner membrane. Regulatory DnaK co-chaperone. Direct interaction between DnaK and DjlA is needed for the induction of the wcaABCDE operon, involved in the synthesis of a colanic acid polysaccharide capsule, possibly through activation of the RcsB/RcsC phosphotransfer signaling pathway. The colanic acid capsule may help the bacterium survive conditions outside the host. The protein is Co-chaperone protein DjlA of Escherichia coli O6:H1 (strain CFT073 / ATCC 700928 / UPEC).